Consider the following 142-residue polypeptide: Large ribosomal subunit protein uL11 (142 aa).

It belongs to the universal ribosomal protein uL11 family. In terms of assembly, part of the ribosomal stalk of the 50S ribosomal subunit. Interacts with L10 and the large rRNA to form the base of the stalk. L10 forms an elongated spine to which L12 dimers bind in a sequential fashion forming a multimeric L10(L12)X complex. One or more lysine residues are methylated.

Functionally, forms part of the ribosomal stalk which helps the ribosome interact with GTP-bound translation factors. This is Large ribosomal subunit protein uL11 from Mycobacterium ulcerans (strain Agy99).